We begin with the raw amino-acid sequence, 1872 residues long: Fatty acid synthase beta subunit pkiC (1872 aa).

Residues 174–425 (VFGGQGECSR…DQSRIPFRDR (252 aa)) are acetyltransferase (AT) domain. An enoyl reductase (ER) domain region spans residues 591–836 (NRVLGAPPIM…IIAATPGVSD (246 aa)). The tract at residues 1111-1132 (TTPASWSTLSLTERDTSEETSD) is disordered. A dehydratase (DH) domain region spans residues 1158-1597 (PSHPLWMRAL…MPLEKLVVEI (440 aa)). Positions 1518–1617 (PPSNEPYAQL…CFSILAKRKE (100 aa)) constitute a MaoC-like domain.

Belongs to the fungal fatty acid synthetase subunit beta family. As to quaternary structure, [Alpha(6)beta(6)] hexamers of two multifunctional subunits (alpha and beta).

The enzyme catalyses acetyl-CoA + n malonyl-CoA + 2n NADPH + 4n H(+) = a long-chain-acyl-CoA + n CoA + n CO2 + 2n NADP(+).. It catalyses the reaction holo-[ACP] + acetyl-CoA = acetyl-[ACP] + CoA. It carries out the reaction holo-[ACP] + malonyl-CoA = malonyl-[ACP] + CoA. The catalysed reaction is a (3R)-hydroxyacyl-[ACP] = a (2E)-enoyl-[ACP] + H2O. The enzyme catalyses a 2,3-saturated acyl-[ACP] + NAD(+) = a (2E)-enoyl-[ACP] + NADH + H(+). It catalyses the reaction (9Z)-octadecenoyl-[ACP] + H2O = (9Z)-octadecenoate + holo-[ACP] + H(+). Its pathway is secondary metabolite biosynthesis. In terms of biological role, fatty acid synthase beta subunit; part of the pki gene cluster that mediates the biosynthesis of 2,4-dihydroxy-3-methyl-6-(2-oxoundecyl)benzaldehyde. The first step in the pathway is the generation of the decanoyl starter unit by the FAS composed of subunits pkiB and pkiC, which is then transferred directly from the FAS to the SAT domain of the non-reducing polyketide synthase pkiA. PkiA condenses the decanoyyl starter unit with 4 malonyl-CoA units and performs one methylation step to yield 2,4-dihydroxy-3-methyl-6-(2-oxoundecyl)benzaldehyde. The chain is Fatty acid synthase beta subunit pkiC from Emericella nidulans (strain FGSC A4 / ATCC 38163 / CBS 112.46 / NRRL 194 / M139) (Aspergillus nidulans).